The following is a 338-amino-acid chain: tRNA N6-adenosine threonylcarbamoyltransferase (338 aa).

Fe cation is bound by residues His-111 and His-115. Substrate is bound by residues 134-138, Asp-167, Gly-180, and Asn-272; that span reads LVSGG. Asp-300 serves as a coordination point for Fe cation.

Belongs to the KAE1 / TsaD family. Fe(2+) is required as a cofactor.

The protein resides in the cytoplasm. The enzyme catalyses L-threonylcarbamoyladenylate + adenosine(37) in tRNA = N(6)-L-threonylcarbamoyladenosine(37) in tRNA + AMP + H(+). Its function is as follows. Required for the formation of a threonylcarbamoyl group on adenosine at position 37 (t(6)A37) in tRNAs that read codons beginning with adenine. Is involved in the transfer of the threonylcarbamoyl moiety of threonylcarbamoyl-AMP (TC-AMP) to the N6 group of A37, together with TsaE and TsaB. TsaD likely plays a direct catalytic role in this reaction. The protein is tRNA N6-adenosine threonylcarbamoyltransferase of Aliivibrio fischeri (strain MJ11) (Vibrio fischeri).